Reading from the N-terminus, the 213-residue chain is MGREFIPLFEDWAATYDQTVQGLDIQYKEAFRGYDHILDAIVRKSGTHVLEFGPGTGNLTAKLLDAGKTVFGIEPSPAMRKLASDKLSGRTEIVDGDFLTFPEPPFQADTIVSSYAFHHLTDEEKRAAIKQYGKYLHLHDKIVFADTVFENAQAYQQAIDKARSQGFYQLANDLETEHYPTLDALKEMFTAEGFAVRFTQQNDFVWIMEAIKR.

S-adenosyl-L-methionine is bound by residues Gly53, Glu74, and Asp97.

Belongs to the methyltransferase superfamily. YrrT family.

Functionally, could be a S-adenosyl-L-methionine-dependent methyltransferase. This is an uncharacterized protein from Bacillus subtilis (strain 168).